The primary structure comprises 90 residues: Secretoglobin family 1D member 2 (90 aa).

Residues 1 to 21 form the signal peptide; sequence MKLSVCLLLVTLALCCYQANA.

This sequence belongs to the secretoglobin family. Lipophilin subfamily. In terms of tissue distribution, highest expression was found in skeletal muscle. Expressed as well in thymus, trachea, kidney, steroid responsive tissues (prostate, testis, uterus, breast and ovary) and salivary gland.

The protein resides in the secreted. Functionally, may bind androgens and other steroids, may also bind estramustine, a chemotherapeutic agent used for prostate cancer. May be under transcriptional regulation of steroid hormones. In Homo sapiens (Human), this protein is Secretoglobin family 1D member 2 (SCGB1D2).